The following is a 458-amino-acid chain: Phosphoglucosamine mutase (458 aa).

Ser-100 (phosphoserine intermediate) is an active-site residue. Mg(2+)-binding residues include Ser-100, Asp-254, Asp-256, and Asp-258. Residue Ser-100 is modified to Phosphoserine.

Belongs to the phosphohexose mutase family. Mg(2+) is required as a cofactor. In terms of processing, activated by phosphorylation.

It carries out the reaction alpha-D-glucosamine 1-phosphate = D-glucosamine 6-phosphate. Catalyzes the conversion of glucosamine-6-phosphate to glucosamine-1-phosphate. This is Phosphoglucosamine mutase from Nocardia farcinica (strain IFM 10152).